We begin with the raw amino-acid sequence, 309 residues long: NAD kinase (309 aa).

Asp-89 acts as the Proton acceptor in catalysis. NAD(+)-binding positions include Asp-89–Gly-90, Asn-163–Glu-164, Arg-191, Asp-193, and Thr-204–Ser-209.

The protein belongs to the NAD kinase family. A divalent metal cation serves as cofactor.

Its subcellular location is the cytoplasm. It catalyses the reaction NAD(+) + ATP = ADP + NADP(+) + H(+). Involved in the regulation of the intracellular balance of NAD and NADP, and is a key enzyme in the biosynthesis of NADP. Catalyzes specifically the phosphorylation on 2'-hydroxyl of the adenosine moiety of NAD to yield NADP. This Shewanella halifaxensis (strain HAW-EB4) protein is NAD kinase.